The chain runs to 37 residues: Large ribosomal subunit protein bL36 (37 aa).

The protein belongs to the bacterial ribosomal protein bL36 family.

The sequence is that of Large ribosomal subunit protein bL36 from Trichlorobacter lovleyi (strain ATCC BAA-1151 / DSM 17278 / SZ) (Geobacter lovleyi).